Here is a 492-residue protein sequence, read N- to C-terminus: MGFSALVASALCTFLLPLLLFLAAVRLWDLYCASGRDPSCPLPLPPGTMGLPFFGETLQMVLQRRKFLQMKRRKYGFIYKTHLFGRPTVRVMGAENVRHILLGEHRLVSVQWPASVRTILGSGCLSNLHNGQHKHRKKVIMQAFSRDALQHYVPVIQEEVSACLAQWLGAGPCLLVYPEVKRLMFRIAMRILLGFQPRQASPDGEQQLVEAFEEMIRNLFSLPIDVPFSGLYRGLRARNIIHAKIEENIRAKMARKEPEGGYKDALQLLMEHTQGNGEQLNMQELKESATELLFGGHETTASAATSLIAFLGLHHDVLQKVRKELQLKGLLSGPNQEKQLNMEFLEQLKYTGCVIKETLRLSPPVPGGFRIALKTLELNGYQIPKGWNVIYSICDTHDVADLFTDKDEFNPDRFMSPSPEDSSRFSFIPFGGGLRSCVGKEFAKVLLKIFTVELARSCDWQLLNGPPTMKTGPIVYPVDNLPAKFIGFSGQI.

Cys437 is a heme binding site.

The protein belongs to the cytochrome P450 family. It depends on heme as a cofactor.

Its subcellular location is the endoplasmic reticulum membrane. It localises to the microsome membrane. The catalysed reaction is all-trans-retinoate + reduced [NADPH--hemoprotein reductase] + O2 = all-trans-(4S)-hydroxyretinoate + oxidized [NADPH--hemoprotein reductase] + H2O + H(+). It carries out the reaction all-trans-(4S)-hydroxyretinoate + reduced [NADPH--hemoprotein reductase] + O2 = all-trans-(4S,16)-dihydroxyretinoate + oxidized [NADPH--hemoprotein reductase] + H2O + H(+). It catalyses the reaction all-trans-retinoate + reduced [NADPH--hemoprotein reductase] + O2 = all-trans-18-hydroxyretinoate + oxidized [NADPH--hemoprotein reductase] + H2O + H(+). Functionally, a cytochrome P450 monooxygenase involved in the metabolism of retinoates (RAs), the active metabolites of vitamin A, and critical signaling molecules in animals. RAs exist as at least four different isomers: all-trans-RA (atRA), 9-cis-RA, 13-cis-RA, and 9,13-dicis-RA, where atRA is considered to be the biologically active isomer, although 9-cis-RA and 13-cis-RA also have activity. Catalyzes the hydroxylation of atRA primarily at C-4 and C-18, thereby contributing to the regulation of atRA homeostasis and signaling. Hydroxylation of atRA limits its biological activity and initiates a degradative process leading to its eventual elimination. Involved in the convertion of atRA to all-trans-4-oxo-RA. Able to metabolize other RAs such as 9-cis, 13-cis and 9,13-di-cis RA. Can oxidize all-trans-13,14-dihydroretinoate (DRA) to metabolites which could include all-trans-4-oxo-DRA, all-trans-4-hydroxy-DRA, all-trans-5,8-epoxy-DRA, and all-trans-18-hydroxy-DRA. May play a role in the oxidative metabolism of xenobiotics such as tazarotenic acid. The polypeptide is Cytochrome P450 26A1 (CYP26A1) (Gallus gallus (Chicken)).